The following is a 296-amino-acid chain: Ribosomal RNA small subunit methyltransferase H (296 aa).

S-adenosyl-L-methionine-binding positions include 30-32, Asp49, Phe76, Asp97, and Gln104; that span reads GGH.

This sequence belongs to the methyltransferase superfamily. RsmH family.

It is found in the cytoplasm. The enzyme catalyses cytidine(1402) in 16S rRNA + S-adenosyl-L-methionine = N(4)-methylcytidine(1402) in 16S rRNA + S-adenosyl-L-homocysteine + H(+). Functionally, specifically methylates the N4 position of cytidine in position 1402 (C1402) of 16S rRNA. The protein is Ribosomal RNA small subunit methyltransferase H of Mesomycoplasma hyopneumoniae (strain 232) (Mycoplasma hyopneumoniae).